Consider the following 294-residue polypeptide: Phosphoprotein (294 aa).

The tract at residues 12–28 is binding to monomeric RNA-free nucleoprotein; that stretch reads MGNEAAKAAEAFQRSLK. Residues 52-97 form a disordered region; it reads KPTISKSTKVTTPPERRNAWGEKPDTTRNQTEEARNEATLEDTSRL. Residues 65–97 show a composition bias toward basic and acidic residues; it reads PERRNAWGEKPDTTRNQTEEARNEATLEDTSRL. S106 bears the Phosphoserine mark. Positions 123 to 128 are binding to host phosphatase PP1; it reads KKKVTF. Residues 135 to 157 are binding to protein M2-1; sequence RYTKLEMEALELLSDNEDDDAES. Residues S148, S157, S158, S168, and S171 each carry the phosphoserine modification. Residues 169 to 194 form an oligomerization and binding to RNA-directed RNA polymerase L region; that stretch reads ALSLEARLESIDEKLSMILGLLRTLN. The disordered stretch occupies residues 234–294; sequence MKEEAKQKSK…PDDDLYSLTM (61 aa). The interval 251 to 279 is binding to RNA-directed RNA polymerase L; sequence LTEKAKELNKIVEDESTSGESEEEEEEED. Over residues 253–263 the composition is skewed to basic and acidic residues; the sequence is EKAKELNKIVE. Positions 264–294 are enriched in acidic residues; that stretch reads DESTSGESEEEEEEEDEEESNPDDDLYSLTM. A binding to the N-RNA complex region spans residues 281–294; it reads EESNPDDDLYSLTM.

It belongs to the pneumoviridae phosphoprotein P family. In terms of assembly, homotetramer. Interacts with protein M2-1; the interaction between the two tetramers is required for the anti-termination and elongation transcriptional activities of protein M2-1. Interacts with host phosphatase PP1; this interaction recruits PP1 to the inclusion bodies. Formation of a complex PP1/M2-1/P allows P to target host PP1 phosphatase to the M2-1 substrate. Interacts with the nucleoprotein N; the phosphorylated phosphoprotein P binds to N-RNA complex. Interacts with the monomeric RNA-free nucleoprotein N. Interacts with RNA-directed RNA polymerase L (via N-terminus); the association of P and L forms the polymerase complex. Constitutively phosphorylated by host.

It localises to the virion. Its subcellular location is the host cytoplasm. In terms of biological role, plays critical roles in regulating RNA replication and transcription through its interactions with multiple proteins. Tethers the RNA-directed RNA polymerase L to the nucleoprotein-RNA complex. Recruits the M2-1 protein, a processivity factor that is required for efficient transcription of viral RNA. Acts as a chaperone for neo-synthesized nucleoprotein by forming an N-P complex that preserves N in a monomeric and RNA-free state and prevents the association of nascent N with host cell RNAs. Recruits the host phosphatase PP1 to inclusion bodies to regulate viral transcription. The sequence is that of Phosphoprotein from Avian metapneumovirus (isolate Canada goose/Minnesota/15a/2001) (AMPV).